Consider the following 57-residue polypeptide: Protein translocase subunit SecE (57 aa).

The helical transmembrane segment at Leu-30 to Met-50 threads the bilayer.

This sequence belongs to the SecE/SEC61-gamma family. Component of the Sec protein translocase complex. Heterotrimer consisting of SecY (alpha), SecG (beta) and SecE (gamma) subunits. The heterotrimers can form oligomers, although 1 heterotrimer is thought to be able to translocate proteins. Interacts with the ribosome. May interact with SecDF, and other proteins may be involved.

The protein localises to the cell membrane. Functionally, essential subunit of the Sec protein translocation channel SecYEG. Clamps together the 2 halves of SecY. May contact the channel plug during translocation. This chain is Protein translocase subunit SecE, found in Haloquadratum walsbyi (strain DSM 16790 / HBSQ001).